Reading from the N-terminus, the 1192-residue chain is DNA topoisomerase 2 (1192 aa).

ATP contacts are provided by residues N64, N95, and 142-149 (GTNGVGLK). Residues E438, D539, and D541 each contribute to the Mg(2+) site. A Topo IIA-type catalytic domain is found at 707–1174 (IPNFLDGMTR…PGASVWLEEI (468 aa)). Y800 serves as the catalytic O-(5'-phospho-DNA)-tyrosine intermediate.

This sequence belongs to the type II topoisomerase family. Mg(2+) is required as a cofactor. The cofactor is Mn(2+). Ca(2+) serves as cofactor.

It localises to the host cytoplasm. The enzyme catalyses ATP-dependent breakage, passage and rejoining of double-stranded DNA.. Its function is as follows. Type II topoisomerase. Processively relaxes supercoiled DNA. Displays DNA-supercoiling activity only when associated with the viral histone-like protein. This is DNA topoisomerase 2 from African swine fever virus (isolate Pig/Kenya/KEN-50/1950) (ASFV).